Here is a 384-residue protein sequence, read N- to C-terminus: Actin-binding Rho-activating protein (384 aa).

Positions methionine 1 to glycine 11 are enriched in basic and acidic residues. 3 disordered regions span residues methionine 1–valine 20, glycine 32–arginine 159, and glutamate 181–glycine 211. The segment covering glutamine 35–glutamate 47 has biased composition (polar residues). Acidic residues predominate over residues aspartate 134–serine 145. Phosphoserine occurs at positions 156 and 191. Actin-binding stretches follow at residues glutamate 202 to alanine 302 and lysine 303 to lysine 384. 2 interaction with actin regions span residues serine 243–glycine 288 and methionine 355–lysine 384.

Binds F-actin and ABLIM1, ABLIM2 and ABLIM3. Interaction with ABLIM2 and ABLIM3 enhances activity. In terms of tissue distribution, specifically expressed in heart and skeletal muscles.

Its subcellular location is the cytoplasm. The protein localises to the myofibril. It is found in the sarcomere. It localises to the cytoskeleton. In terms of biological role, acts as an activator of serum response factor (SRF)-dependent transcription possibly by inducing nuclear translocation of MKL1 or MKL2 and through a mechanism requiring Rho-actin signaling. In Sus scrofa (Pig), this protein is Actin-binding Rho-activating protein (ABRA).